The sequence spans 164 residues: Large ribosomal subunit protein uL10 (164 aa).

The protein belongs to the universal ribosomal protein uL10 family. Part of the ribosomal stalk of the 50S ribosomal subunit. The N-terminus interacts with L11 and the large rRNA to form the base of the stalk. The C-terminus forms an elongated spine to which L12 dimers bind in a sequential fashion forming a multimeric L10(L12)X complex.

Its function is as follows. Forms part of the ribosomal stalk, playing a central role in the interaction of the ribosome with GTP-bound translation factors. This chain is Large ribosomal subunit protein uL10, found in Helicobacter pylori (strain HPAG1).